Consider the following 162-residue polypeptide: ATP synthase subunit b (162 aa).

The chain crosses the membrane as a helical span at residues 6–28 (LVTFVLTIVNILVLFYLLKRFLF).

Belongs to the ATPase B chain family. F-type ATPases have 2 components, F(1) - the catalytic core - and F(0) - the membrane proton channel. F(1) has five subunits: alpha(3), beta(3), gamma(1), delta(1), epsilon(1). F(0) has three main subunits: a(1), b(2) and c(10-14). The alpha and beta chains form an alternating ring which encloses part of the gamma chain. F(1) is attached to F(0) by a central stalk formed by the gamma and epsilon chains, while a peripheral stalk is formed by the delta and b chains.

It is found in the cell membrane. In terms of biological role, f(1)F(0) ATP synthase produces ATP from ADP in the presence of a proton or sodium gradient. F-type ATPases consist of two structural domains, F(1) containing the extramembraneous catalytic core and F(0) containing the membrane proton channel, linked together by a central stalk and a peripheral stalk. During catalysis, ATP synthesis in the catalytic domain of F(1) is coupled via a rotary mechanism of the central stalk subunits to proton translocation. Its function is as follows. Component of the F(0) channel, it forms part of the peripheral stalk, linking F(1) to F(0). The chain is ATP synthase subunit b from Natranaerobius thermophilus (strain ATCC BAA-1301 / DSM 18059 / JW/NM-WN-LF).